A 329-amino-acid polypeptide reads, in one-letter code: DNA-directed RNA polymerase subunit alpha (329 aa).

Residues 1-235 (MQGSVTEFLK…EQLEAFVDLR (235 aa)) form an alpha N-terminal domain (alpha-NTD) region. Residues 249 to 329 (FDPILLRPVD…NWPPASIADE (81 aa)) form an alpha C-terminal domain (alpha-CTD) region.

Belongs to the RNA polymerase alpha chain family. In terms of assembly, homodimer. The RNAP catalytic core consists of 2 alpha, 1 beta, 1 beta' and 1 omega subunit. When a sigma factor is associated with the core the holoenzyme is formed, which can initiate transcription.

It catalyses the reaction RNA(n) + a ribonucleoside 5'-triphosphate = RNA(n+1) + diphosphate. Functionally, DNA-dependent RNA polymerase catalyzes the transcription of DNA into RNA using the four ribonucleoside triphosphates as substrates. This chain is DNA-directed RNA polymerase subunit alpha, found in Photorhabdus laumondii subsp. laumondii (strain DSM 15139 / CIP 105565 / TT01) (Photorhabdus luminescens subsp. laumondii).